A 303-amino-acid polypeptide reads, in one-letter code: Phosphatidylglycerol--prolipoprotein diacylglyceryl transferase (303 aa).

Transmembrane regions (helical) follow at residues 18–38, 58–78, 106–126, and 133–153; these read LGPFSLRWYGLLIAISVLVGL, LLPILVLASVIGARIYYVAFE, IWGGGIAIHGALIMGTLSIIF, and EHFWDVIDVLVPSVALGQAIG. R154 serves as a coordination point for a 1,2-diacyl-sn-glycero-3-phospho-(1'-sn-glycerol). 3 consecutive transmembrane segments (helical) span residues 193-213, 223-243, and 266-286; these read PTFLYESVWNIFVFGILIFLF, LPPGSLSCLYLITYSLGRFWI, and IAQLISLFLISAGLLGIWRIY.

The protein belongs to the Lgt family.

It localises to the cell inner membrane. The catalysed reaction is L-cysteinyl-[prolipoprotein] + a 1,2-diacyl-sn-glycero-3-phospho-(1'-sn-glycerol) = an S-1,2-diacyl-sn-glyceryl-L-cysteinyl-[prolipoprotein] + sn-glycerol 1-phosphate + H(+). It participates in protein modification; lipoprotein biosynthesis (diacylglyceryl transfer). Functionally, catalyzes the transfer of the diacylglyceryl group from phosphatidylglycerol to the sulfhydryl group of the N-terminal cysteine of a prolipoprotein, the first step in the formation of mature lipoproteins. This chain is Phosphatidylglycerol--prolipoprotein diacylglyceryl transferase, found in Prochlorococcus marinus (strain NATL2A).